Reading from the N-terminus, the 239-residue chain is Fatty acid metabolism regulator protein (239 aa).

The HTH gntR-type domain occupies 6–74 (QSPAGFAEEY…HGKPTKVNNF (69 aa)). Positions 34 to 53 (ERELSELIGVTRTTLREVLQ) form a DNA-binding region, H-T-H motif.

Homodimer.

Its subcellular location is the cytoplasm. Multifunctional regulator of fatty acid metabolism. The protein is Fatty acid metabolism regulator protein of Yersinia enterocolitica serotype O:8 / biotype 1B (strain NCTC 13174 / 8081).